A 368-amino-acid polypeptide reads, in one-letter code: Biglycan (368 aa).

The N-terminal stretch at Met-1–Ala-16 is a signal peptide. Positions Leu-17–Asn-37 are excised as a propeptide. O-linked (Xyl...) (glycosaminoglycan) serine glycans are attached at residues Ser-42 and Ser-47. Intrachain disulfides connect Cys-63–Cys-69 and Cys-67–Cys-76. LRR repeat units lie at residues Lys-82–Ile-102, Ser-103–Ile-126, Ser-127–Leu-150, Val-151–Ile-171, Arg-172–Leu-195, Glu-196–Leu-220, Thr-221–Ile-241, Gln-242–Ile-265, Arg-266–Leu-289, Ala-290–Ile-312, Thr-313–Val-342, and Pro-343–Lys-368. O-linked (Xyl...) (glycosaminoglycan) serine glycosylation is found at Ser-180 and Ser-198. Residues Asn-270 and Asn-311 are each glycosylated (N-linked (GlcNAc...) asparagine). Cys-321 and Cys-354 are oxidised to a cystine.

This sequence belongs to the small leucine-rich proteoglycan (SLRP) family. SLRP class I subfamily. As to quaternary structure, homodimer. Forms a ternary complex with MFAP2 and ELN. The two attached glycosaminoglycan chains can be either chondroitin sulfate or dermatan sulfate. In terms of tissue distribution, detected in placenta (at protein level). Found in several connective tissues, especially in articular cartilages.

It is found in the secreted. The protein localises to the extracellular space. Its subcellular location is the extracellular matrix. May be involved in collagen fiber assembly. This Homo sapiens (Human) protein is Biglycan (BGN).